A 364-amino-acid polypeptide reads, in one-letter code: Aminomethyltransferase (364 aa).

This sequence belongs to the GcvT family. In terms of assembly, the glycine cleavage system is composed of four proteins: P, T, L and H.

The catalysed reaction is N(6)-[(R)-S(8)-aminomethyldihydrolipoyl]-L-lysyl-[protein] + (6S)-5,6,7,8-tetrahydrofolate = N(6)-[(R)-dihydrolipoyl]-L-lysyl-[protein] + (6R)-5,10-methylene-5,6,7,8-tetrahydrofolate + NH4(+). Its function is as follows. The glycine cleavage system catalyzes the degradation of glycine. The protein is Aminomethyltransferase of Shewanella piezotolerans (strain WP3 / JCM 13877).